Reading from the N-terminus, the 2212-residue chain is COPII coat assembly protein SEC16 (2212 aa).

Polar residues-rich tracts occupy residues 1–12 (MSIRKSTTSPVS) and 183–200 (ENSASPQEVDSKQTSSTI). Disordered stretches follow at residues 1 to 31 (MSIRKSTTSPVSGTDRADLNDSFAVSEAEPS), 173 to 343 (IYGE…QQEV), 355 to 451 (RESS…HDYS), 480 to 563 (GFFT…PVEP), 626 to 666 (KVKP…PPVS), 705 to 849 (AAPV…APPI), 861 to 948 (SATS…SNPN), 1380 to 1400 (EEPKSKSGENGVFSKFSPSVS), 1416 to 1446 (NKYPHSSPQMPSGQFGSSSIAPSTADGVSVP), 1484 to 1542 (SFSV…VPPV), 1572 to 1593 (SSIGSHRQHGYHPPTSQTPTVN), 1680 to 1866 (LSAS…FGYN), 1883 to 1927 (FDNS…YQGD), and 1960 to 2212 (SSRL…FDKK). Residues 246-282 (QPQKVEHVLPWEEKPDEVSQKDEALPWEERRVEHPEQ) are compositionally biased toward basic and acidic residues. Residues 430–444 (EQSTKPQDTQPQVSQ) show a composition bias toward polar residues. Residues 483–497 (TERRPEQESETKQES) show a composition bias toward basic and acidic residues. Acidic residues-rich tracts occupy residues 498-509 (LDELFEKDEDFL) and 533-553 (LDLDDDLLLDDDLLDDDEPEL). Residues 637–651 (TTKYSQPVASPNLSN) show a composition bias toward polar residues. Over residues 654–665 (SAPPATTIPPPV) the composition is skewed to pro residues. Composition is skewed to polar residues over residues 714–731 (PHIQKSPQISNTPISASS), 740–767 (MPSNTQKQNPHSPLQGSQYSFPRKTSSG), and 778–807 (APPSSNQYATVSAQVQPGLPQSSLPQSGMS). Low complexity predominate over residues 808–819 (QPGLQPFPQPQG). 2 stretches are compositionally biased toward polar residues: residues 830–849 (QIQNSPLGQPQQTHNYAPPI) and 909–933 (HSGTSPSIAQSSLTSRNRGISNPRN). Composition is skewed to polar residues over residues 1416–1437 (NKYPHSSPQMPSGQFGSSSIAP), 1484–1507 (SFSVHSQSTQVPPSHHSTPQQSHV), and 1521–1536 (YSPSNASPQVPDSTAS). A compositionally biased stretch (polar residues) spans 1681-1699 (SASQEVSGQPSAASTSVPS). Over residues 1960 to 1975 (SSRLSQSQQSALYQQY) the composition is skewed to low complexity. Residues 1989-2001 (VEEDDEEDEDEED) are compositionally biased toward acidic residues. 2 stretches are compositionally biased toward basic and acidic residues: residues 2002-2036 (RDKKRLQEEEEKRAKAASEEAKKKASEAAAKRDPG) and 2065-2080 (YDEKHKRWLDKSRPIE). Low complexity-rich tracts occupy residues 2121-2131 (NPSGVAPTAAP) and 2138-2147 (PSGVTSGPPS). Over residues 2195–2205 (RKAKRNTRRGH) the composition is skewed to basic residues.

This sequence belongs to the SEC16 family.

It localises to the endoplasmic reticulum membrane. Functionally, involved in the initiation of assembly of the COPII coat required for the formation of transport vesicles from the endoplasmic reticulum (ER) and the selection of cargo molecules. Also involved in autophagy. This is COPII coat assembly protein SEC16 (SEC16) from Scheffersomyces stipitis (strain ATCC 58785 / CBS 6054 / NBRC 10063 / NRRL Y-11545) (Yeast).